Reading from the N-terminus, the 255-residue chain is 14-3-3 protein epsilon (255 aa).

Residue Met1 is modified to N-acetylmethionine. At Lys50 the chain carries N6-acetyllysine; alternate. Residue Lys50 forms a Glycyl lysine isopeptide (Lys-Gly) (interchain with G-Cter in SUMO2); alternate linkage. A Phosphoserine modification is found at Ser65. 3 positions are modified to N6-acetyllysine: Lys69, Lys118, and Lys123. At Tyr131 the chain carries Phosphotyrosine. Position 137 is a phosphothreonine (Thr137). Phosphoserine is present on Ser210. A Phosphothreonine modification is found at Thr232. The disordered stretch occupies residues 234–255 (DMQGDGEEQNKEALQDVEDENQ).

This sequence belongs to the 14-3-3 family. As to quaternary structure, homodimer. Heterodimerizes with YWHAZ. Interacts with PKA-phosphorylated AANAT. Interacts with ABL1 (phosphorylated form); the interaction retains it in the cytoplasm. Interacts with ARHGEF28. Interacts with BEX3. Weakly interacts with CDKN1B. Interacts with the 'Thr-369' phosphorylated form of DAPK2. Interacts with DENND1A. Interacts with GAB2. Interacts with phosphorylated GRB10. Interacts with KSR1. Interacts with NDEL1. Interacts with PI4KB, TBC1D22A and TBC1D22B. Interacts with the phosphorylated (by AKT1) form of SRPK2. Interacts with TIAM2. Interacts with the 'Ser-1134' and 'Ser-1161' phosphorylated form of SOS1. Interacts with ZFP36 (via phosphorylated form). Interacts with SLITRK1. Interacts with HSF1 (via phosphorylated form); this interaction promotes HSF1 sequestration in the cytoplasm in a ERK-dependent manner. Interacts with RIPOR2. Interacts with KLHL22; required for the nuclear localization of KLHL22 upon amino acid starvation. Interacts with CRTC1. Interacts with CRTC2 (probably when phosphorylated at 'Ser-171'). Interacts with CRTC3 (probably when phosphorylated at 'Ser-162' and/or 'Ser-273'). Interacts with ATP2B1 and ATP2B3; this interaction inhibits calcium-transporting ATPase activity. Interacts with MEFV. Interacts with RNF115. Interacts with GPR15; this interaction promotes ER-to-Golgi transport of GPR15.

Its subcellular location is the nucleus. The protein resides in the cytoplasm. It is found in the melanosome. Its function is as follows. Adapter protein implicated in the regulation of a large spectrum of both general and specialized signaling pathways. Binds to a large number of partners, usually by recognition of a phosphoserine or phosphothreonine motif. Binding generally results in the modulation of the activity of the binding partner. Positively regulates phosphorylated protein HSF1 nuclear export to the cytoplasm. The sequence is that of 14-3-3 protein epsilon (Ywhae) from Rattus norvegicus (Rat).